A 1622-amino-acid polypeptide reads, in one-letter code: ABC transporter C family member 1 (1622 aa).

The next 9 helical transmembrane spans lie at 37–57 (FVLG…LWLI), 73–93 (FSYF…FRLV), 110–130 (EAFM…MTVV), 145–165 (FAVI…LSVK), 174–194 (YLYI…FVYF), 336–356 (AWIG…GVLC), 440–460 (VASI…TVII), 527–547 (FILN…FSLL), and 557–577 (FTSL…PNII). Residues 302–582 (FWWGGFWKIG…LPNIITQMVN (281 aa)) form the ABC transmembrane type-1 1 domain. Residues 614–838 (ISIRNGYFSW…GPLFQRLMEN (225 aa)) form the ABC transporter 1 domain. 649–656 (GSTGEGKT) contributes to the ATP binding site. Positions 852–876 (AEVDQTSVKPVENGNANNLQKDGIE) are disordered. The span at 855–871 (DQTSVKPVENGNANNLQ) shows a compositional bias: polar residues. The next 6 helical transmembrane spans lie at 909–929 (ALGG…TQVF), 951–971 (PLFY…VTLI), 1027–1049 (AVFV…LIGI), 1053–1072 (LSLW…YLYY), 1138–1158 (LGIR…SLAV), and 1172–1192 (STMG…TAVL). Positions 916–1200 (VMMLVICYVL…VLRLASLAEN (285 aa)) constitute an ABC transmembrane type-1 2 domain. The segment at 1231-1246 (WPSSGSIKFEDVVLRY) is interaction with calmodulin and FKP42/TWD1. Positions 1237 to 1471 (IKFEDVVLRY…GESSFSKMVQ (235 aa)) constitute an ABC transporter 2 domain. Residue 1271 to 1278 (GRTGAGKS) participates in ATP binding.

It belongs to the ABC transporter superfamily. ABCC family. Conjugate transporter (TC 3.A.1.208) subfamily. Interacts with calmodulin (CaM), PAS1 and FKBP42/TWD1. In terms of tissue distribution, ubiquitous, with higher levels in leaves and stems and lower levels in roots. Localized in the root apex, root hair tips and root epidermis.

The protein resides in the vacuole membrane. The enzyme catalyses ATP + H2O + xenobioticSide 1 = ADP + phosphate + xenobioticSide 2.. In terms of biological role, pump for glutathione S-conjugates. Mediates the transport of S-(2,4-dinitrophenyl)-glutathione (DNP-GS), GSSG, cyanidin 3-glucoside-GS (C3G-GS) and metolachlor-GS (MOC-GS). This chain is ABC transporter C family member 1 (ABCC1), found in Arabidopsis thaliana (Mouse-ear cress).